Reading from the N-terminus, the 246-residue chain is Ly6/PLAUR domain-containing protein 4 (246 aa).

The N-terminal stretch at 1–26 is a signal peptide; that stretch reads MILQAWRSLQLLYLLEAISLLPCTEA. An N-linked (GlcNAc...) asparagine glycan is attached at asparagine 117. The region spanning 142–223 is the UPAR/Ly6 domain; that stretch reads CPSCVGKHDQ…INVLDKSEAV (82 aa). Alanine 225 carries GPI-anchor amidated alanine lipidation. Positions 226 to 246 are cleaved as a propeptide — removed in mature form; it reads GHCSQGISWSVLLCLLILLRD.

The protein localises to the cell membrane. The sequence is that of Ly6/PLAUR domain-containing protein 4 (Lypd4) from Mus musculus (Mouse).